We begin with the raw amino-acid sequence, 315 residues long: Annexin Gh1 (315 aa).

4 Annexin repeats span residues 10 to 81 (PSVS…LWAL), 82 to 153 (DPAE…PLVS), 165 to 236 (TLAK…STVK), and 240 to 311 (YPEK…VLAG). Ca(2+) is bound by residues Phe23, Gly25, Gly27, and Glu67. Positions 253, 255, 257, 295, 297, 298, and 303 each coordinate Ca(2+).

It belongs to the annexin family. As to quaternary structure, monomer. Trimer. Oligomerization is calcium-independent. Disassembly of the oligomers seems to be required for calcium-binding.

It localises to the membrane. Functionally, binds to phospholipid vesicles in a calcium-dependent manner in vitro. Prefers phosphatidyl-serine containing membranes. May have a role in the membrane cytoskeleton scaffolding or exocytotic processes. May be involved in oxidative stress response. This chain is Annexin Gh1, found in Gossypium hirsutum (Upland cotton).